Here is a 297-residue protein sequence, read N- to C-terminus: N-acetylmuramic acid 6-phosphate etherase (297 aa).

The SIS domain maps to 55–218 (AAAALKSGGR…STGAMVKFGK (164 aa)). Glutamate 83 serves as the catalytic Proton donor. Residue glutamate 114 is part of the active site.

Belongs to the GCKR-like family. MurNAc-6-P etherase subfamily. Homodimer.

The enzyme catalyses N-acetyl-D-muramate 6-phosphate + H2O = N-acetyl-D-glucosamine 6-phosphate + (R)-lactate. It participates in amino-sugar metabolism; 1,6-anhydro-N-acetylmuramate degradation. It functions in the pathway amino-sugar metabolism; N-acetylmuramate degradation. The protein operates within cell wall biogenesis; peptidoglycan recycling. Specifically catalyzes the cleavage of the D-lactyl ether substituent of MurNAc 6-phosphate, producing GlcNAc 6-phosphate and D-lactate. Together with AnmK, is also required for the utilization of anhydro-N-acetylmuramic acid (anhMurNAc) either imported from the medium or derived from its own cell wall murein, and thus plays a role in cell wall recycling. The sequence is that of N-acetylmuramic acid 6-phosphate etherase from Salmonella schwarzengrund (strain CVM19633).